We begin with the raw amino-acid sequence, 311 residues long: GTPase Era (311 aa).

The Era-type G domain occupies 16-188 (HAGFVAIVGK…REQLLEVLPE (173 aa)). Positions 24–31 (GKPNVGKS) are G1. A GTP-binding site is contributed by 24–31 (GKPNVGKS). The tract at residues 50–54 (QTTRR) is G2. Positions 71–74 (DTPG) are G3. Residues 71–75 (DTPGL) and 133–136 (NKTD) contribute to the GTP site. The interval 133 to 136 (NKTD) is G4. Positions 166 to 168 (LSA) are G5. A KH type-2 domain is found at 219–296 (LRDELPYAVA…YLGLEVIVIP (78 aa)).

This sequence belongs to the TRAFAC class TrmE-Era-EngA-EngB-Septin-like GTPase superfamily. Era GTPase family. In terms of assembly, monomer.

The protein localises to the cytoplasm. It is found in the cell membrane. In terms of biological role, an essential GTPase that binds both GDP and GTP, with rapid nucleotide exchange. Plays a role in 16S rRNA processing and 30S ribosomal subunit biogenesis and possibly also in cell cycle regulation and energy metabolism. The polypeptide is GTPase Era (Deinococcus radiodurans (strain ATCC 13939 / DSM 20539 / JCM 16871 / CCUG 27074 / LMG 4051 / NBRC 15346 / NCIMB 9279 / VKM B-1422 / R1)).